The primary structure comprises 230 residues: Thymidylate kinase (230 aa).

20–27 (GGEGAGKS) contributes to the ATP binding site.

The protein belongs to the thymidylate kinase family.

It carries out the reaction dTMP + ATP = dTDP + ADP. In terms of biological role, phosphorylation of dTMP to form dTDP in both de novo and salvage pathways of dTTP synthesis. In Rhodopseudomonas palustris (strain BisB18), this protein is Thymidylate kinase.